The sequence spans 672 residues: Glycerophosphocholine phosphodiesterase GPCPD1 (672 aa).

The 113-residue stretch at 1 to 113 (MTPSQVTFEI…IIIDDGQFGI (113 aa)) folds into the CBM20 domain. Substrate contacts are provided by residues Arg-68 and 86–87 (HK). Ser-175 is subject to Phosphoserine. In terms of domain architecture, GP-PDE spans 318–618 (PLDVGHRGAG…DRIYDWMPEQ (301 aa)). Tyr-608 bears the Phosphotyrosine mark.

This sequence belongs to the glycerophosphoryl diester phosphodiesterase family.

It is found in the cytoplasm. The protein resides in the cytosol. It carries out the reaction sn-glycerol 3-phosphocholine + H2O = sn-glycerol 3-phosphate + choline + H(+). May be involved in the negative regulation of skeletal muscle differentiation, independently of its glycerophosphocholine phosphodiesterase activity. This Rattus norvegicus (Rat) protein is Glycerophosphocholine phosphodiesterase GPCPD1 (Gpcpd1).